The chain runs to 109 residues: uncharacterized protein (109 aa).

A helical transmembrane segment spans residues 29-49 (ITIIITLVIIFIIFTLIILYF).

The protein resides in the membrane. This is an uncharacterized protein from Sputnik virophage.